Here is a 120-residue protein sequence, read N- to C-terminus: Large ribosomal subunit protein uL18 (120 aa).

This sequence belongs to the universal ribosomal protein uL18 family. As to quaternary structure, part of the 50S ribosomal subunit; part of the 5S rRNA/L5/L18/L25 subcomplex. Contacts the 5S and 23S rRNAs.

Functionally, this is one of the proteins that bind and probably mediate the attachment of the 5S RNA into the large ribosomal subunit, where it forms part of the central protuberance. The chain is Large ribosomal subunit protein uL18 from Rhizobium etli (strain CIAT 652).